The chain runs to 62 residues: Large ribosomal subunit protein uL30 (62 aa).

It belongs to the universal ribosomal protein uL30 family. Part of the 50S ribosomal subunit.

This is Large ribosomal subunit protein uL30 from Alkalilimnicola ehrlichii (strain ATCC BAA-1101 / DSM 17681 / MLHE-1).